The primary structure comprises 321 residues: Lipoyl synthase (321 aa).

The [4Fe-4S] cluster site is built by C68, C73, C79, C94, C98, C101, and S308. The Radical SAM core domain maps to 80 to 297 (FNHGTATFMI…KAEAIAMGFT (218 aa)).

The protein belongs to the radical SAM superfamily. Lipoyl synthase family. [4Fe-4S] cluster serves as cofactor.

The protein localises to the cytoplasm. It carries out the reaction [[Fe-S] cluster scaffold protein carrying a second [4Fe-4S](2+) cluster] + N(6)-octanoyl-L-lysyl-[protein] + 2 oxidized [2Fe-2S]-[ferredoxin] + 2 S-adenosyl-L-methionine + 4 H(+) = [[Fe-S] cluster scaffold protein] + N(6)-[(R)-dihydrolipoyl]-L-lysyl-[protein] + 4 Fe(3+) + 2 hydrogen sulfide + 2 5'-deoxyadenosine + 2 L-methionine + 2 reduced [2Fe-2S]-[ferredoxin]. Its pathway is protein modification; protein lipoylation via endogenous pathway; protein N(6)-(lipoyl)lysine from octanoyl-[acyl-carrier-protein]: step 2/2. Its function is as follows. Catalyzes the radical-mediated insertion of two sulfur atoms into the C-6 and C-8 positions of the octanoyl moiety bound to the lipoyl domains of lipoate-dependent enzymes, thereby converting the octanoylated domains into lipoylated derivatives. The polypeptide is Lipoyl synthase (Pectobacterium carotovorum subsp. carotovorum (strain PC1)).